The sequence spans 489 residues: uncharacterized protein (489 aa).

Position 26 is a phosphothreonine (Thr26). Ser27 is subject to Phosphoserine. 3 helical membrane-spanning segments follow: residues 63–83 (IVYL…IEFA), 182–202 (LVWS…ILCA), and 221–241 (VFKL…IAFL). Disordered stretches follow at residues 260-312 (PKTS…APLE), 401-435 (STLL…VPPS), and 450-489 (PSIN…PVVH). Ser263 carries the phosphoserine modification. Polar residues predominate over residues 268-282 (QRGTSSSQPSENDAN). Residues 450-465 (PSINNVGGSTAPSVNN) show a composition bias toward polar residues. A compositionally biased stretch (low complexity) spans 477-489 (SRSSTLTERPVVH).

It is found in the endoplasmic reticulum membrane. This is an uncharacterized protein from Schizosaccharomyces pombe (strain 972 / ATCC 24843) (Fission yeast).